Here is a 126-residue protein sequence, read N- to C-terminus: DNA-directed RNA polymerase subunit omega (126 aa).

This sequence belongs to the RNA polymerase subunit omega family. As to quaternary structure, the RNAP catalytic core consists of 2 alpha, 1 beta, 1 beta' and 1 omega subunit. When a sigma factor is associated with the core the holoenzyme is formed, which can initiate transcription.

The enzyme catalyses RNA(n) + a ribonucleoside 5'-triphosphate = RNA(n+1) + diphosphate. Its function is as follows. Promotes RNA polymerase assembly. Latches the N- and C-terminal regions of the beta' subunit thereby facilitating its interaction with the beta and alpha subunits. This is DNA-directed RNA polymerase subunit omega from Rickettsia bellii (strain OSU 85-389).